Reading from the N-terminus, the 799-residue chain is Oxygen sensor protein DosP (799 aa).

Residues 10–81 (ADGIFFPALE…YIRHNREGGK (72 aa)) form the PAS 1 domain. Positions 69 and 87 each coordinate heme. One can recognise a PAS 2 domain in the interval 134–207 (QTRQLIIAVD…LQQLLWKTAR (74 aa)). One can recognise a PAC domain in the interval 208 to 260 (DQDEFLLLTRTGEKIWIKASISPVYDVLAHLQNLVMTFSDITEERQIRQLEGN). Residues 402-532 (VSPVVYLIGV…GGNGWQFFSP (131 aa)) form the GGDEF domain. In terms of domain architecture, EAL spans 541–795 (RLVLGAALKE…EIPGWMSSVL (255 aa)).

Homodimer; has been previously suggested to be a homotetramer based on size exclusion chromatography. Forms a complex with DosC. It depends on heme as a cofactor. Mg(2+) is required as a cofactor. In terms of processing, the heme distal ligand is coordinated by Met-87 in the active Fe(2+) (ferrous) form, by O(2) in the O(2)-bound form and by H(2)O in the inactive Fe(3+) (ferric) form.

It catalyses the reaction 3',3'-c-di-GMP + H2O = 5'-phosphoguanylyl(3'-&gt;5')guanosine + H(+). Has c-di-GMP PDE activity in both Fe(2+) and Fe(3+)-bound forms; this activity is increased 6-7 fold by binding of O(2) and CO and NO. Has cAMP PDE activity only when the heme is in the Fe(2+) form. cAMP PDE activity is inhibited by oxidation of the heme iron and by binding of external ligands such as CO and NO. Also strongly inhibited by etazolate hydrochloride, a selective cAMP PDE inhibitor. PDE activity is inhibited in the absence of oxygen. Its function is as follows. Heme-based oxygen sensor protein displaying phosphodiesterase (PDE) activity toward c-di-GMP in response to oxygen availability. Involved in the modulation of intracellular c-di-GMP levels, in association with DosC which catalyzes the biosynthesis of c-di-GMP (diguanylate cyclase activity). Cyclic-di-GMP is a second messenger which controls cell surface-associated traits in bacteria. Has very poor PDE activity on cAMP but is not active with cGMP, bis(p-nitrophenyl) phosphate or p-nitrophenyl phosphate. Via its PDE activity on c-di-GMP, DosP regulates biofilm formation through the repression of transcription of the csgBAC operon, which encodes curli structural subunits. This is Oxygen sensor protein DosP (dosP) from Escherichia coli (strain K12).